A 150-amino-acid polypeptide reads, in one-letter code: Large ribosomal subunit protein bL9 (150 aa).

The protein belongs to the bacterial ribosomal protein bL9 family.

In terms of biological role, binds to the 23S rRNA. The polypeptide is Large ribosomal subunit protein bL9 (Paracidovorax citrulli (strain AAC00-1) (Acidovorax citrulli)).